The sequence spans 75 residues: Small ribosomal subunit protein bS18 (75 aa).

It belongs to the bacterial ribosomal protein bS18 family. As to quaternary structure, part of the 30S ribosomal subunit. Forms a tight heterodimer with protein bS6.

Binds as a heterodimer with protein bS6 to the central domain of the 16S rRNA, where it helps stabilize the platform of the 30S subunit. The protein is Small ribosomal subunit protein bS18 of Ruegeria sp. (strain TM1040) (Silicibacter sp.).